A 227-amino-acid chain; its full sequence is MAEEHETRPPSAGRPPSSGRGRADDADEREEGEIADDDSGHAPPQANPAAPHPLEHAWTFWFDNPQGKSKQATWGSSIRPIHTFSTVEDFWSLYNNIHHPSKLVVGADFHCFKNKIEPKWEDPICANGGKWTFSCGRGKSDTMWLHTLLAMIGEQFDYGDEICGAVVSVRGKQERIAIWTKNAANEAAQISIGKQWKEFLDYKDSIGFIVHDDAKKMDKGLKNRYTV.

A disordered region spans residues 1–52 (MAEEHETRPPSAGRPPSSGRGRADDADEREEGEIADDDSGHAPPQANPAAPH). The segment covering 9–20 (PPSAGRPPSSGR) has biased composition (low complexity). Over residues 25–37 (DADEREEGEIADD) the composition is skewed to acidic residues. 2 EIF4G-binding regions span residues 52–55 (HPLE) and 62–98 (FDNP…NNIH). Residues 70 to 75 (KQATWG), K102, and 120 to 121 (WE) contribute to the mRNA site. Cysteines 125 and 163 form a disulfide. Positions 146–155 (HTLLAMIGEQ) are EIF4G-binding. Residues 170–175 (RGKQER) and 215–219 (KKMDK) each bind mRNA.

The protein belongs to the eukaryotic initiation factor 4E family. In terms of assembly, EIF4F is a multi-subunit complex, the composition of which varies with external and internal environmental conditions. It is composed of at least EIF4A, EIF4E and EIF4G. EIF4E is also known to interact with other partners. In higher plants two isoforms of EIF4F have been identified, named isoform EIF4F and isoform EIF(iso)4F. Isoform EIF4F has subunits p220 and p26, whereas isoform EIF(iso)4F has subunits p82 and p28. In terms of processing, according to the redox status, the Cys-125-Cys-163 disulfide bridge may have a role in regulating protein function by affecting its ability to bind capped mRNA.

It localises to the nucleus. The protein resides in the cytoplasm. Component of the protein complex eIF4F, which is involved in the recognition of the mRNA cap, ATP-dependent unwinding of 5'-terminal secondary structure and recruitment of mRNA to the ribosome. Recognizes and binds the 7-methylguanosine-containing mRNA cap during an early step in the initiation of protein synthesis and facilitates ribosome binding by inducing the unwinding of the mRNAs secondary structures. In Oryza sativa subsp. japonica (Rice), this protein is Eukaryotic translation initiation factor 4E-1.